The chain runs to 197 residues: MFDYIKGQLTKITAKYIVVEANGLGYIIYVANPYSFSDSVNQTLTIYLHQVIREDAHLLFGFHTENEKDVFLKLISVSGIGPMTALAIVAVDDNEGLVAAIDNSDIKYLMKFPKIGKKTAQQMILDLSGKFVTIPEGGQAQQMPKAKGNQQLDEAIEALLALGYKATELKKIRAFFEGTDDTAEQYIKSALKMLMKG.

Positions 1-63 (MFDYIKGQLT…EDAHLLFGFH (63 aa)) are domain I. The interval 64–142 (TENEKDVFLK…TIPEGGQAQQ (79 aa)) is domain II. The interval 142–146 (QMPKA) is flexible linker. The interval 147–197 (KGNQQLDEAIEALLALGYKATELKKIRAFFEGTDDTAEQYIKSALKMLMKG) is domain III.

The protein belongs to the RuvA family. Homotetramer. Forms an RuvA(8)-RuvB(12)-Holliday junction (HJ) complex. HJ DNA is sandwiched between 2 RuvA tetramers; dsDNA enters through RuvA and exits via RuvB. An RuvB hexamer assembles on each DNA strand where it exits the tetramer. Each RuvB hexamer is contacted by two RuvA subunits (via domain III) on 2 adjacent RuvB subunits; this complex drives branch migration. In the full resolvosome a probable DNA-RuvA(4)-RuvB(12)-RuvC(2) complex forms which resolves the HJ.

The protein localises to the cytoplasm. Functionally, the RuvA-RuvB-RuvC complex processes Holliday junction (HJ) DNA during genetic recombination and DNA repair, while the RuvA-RuvB complex plays an important role in the rescue of blocked DNA replication forks via replication fork reversal (RFR). RuvA specifically binds to HJ cruciform DNA, conferring on it an open structure. The RuvB hexamer acts as an ATP-dependent pump, pulling dsDNA into and through the RuvAB complex. HJ branch migration allows RuvC to scan DNA until it finds its consensus sequence, where it cleaves and resolves the cruciform DNA. In Streptococcus uberis (strain ATCC BAA-854 / 0140J), this protein is Holliday junction branch migration complex subunit RuvA.